We begin with the raw amino-acid sequence, 358 residues long: NADH-quinone oxidoreductase subunit H (358 aa).

8 helical membrane passes run 20 to 40, 95 to 115, 128 to 148, 168 to 188, 206 to 226, 253 to 273, 290 to 310, and 334 to 354; these read ITVGLVVSVIVKIVIILIPLI, ALFYIGPIMSLAPSFAAWAVI, IGLLYILMITSLSVYGVIIAG, ISYEIAMSAALVCVVMVSGSM, VFSWNWLPLFPIFIVYLISAV, GFAFALFFLAEYIFMILISAL, WGFIGTPSAFWMFVKMAAVLY, and VLIPIGFAYIVVLGVWMISPL.

The protein belongs to the complex I subunit 1 family. In terms of assembly, NDH-1 is composed of 14 different subunits. Subunits NuoA, H, J, K, L, M, N constitute the membrane sector of the complex.

Its subcellular location is the cell inner membrane. It catalyses the reaction a quinone + NADH + 5 H(+)(in) = a quinol + NAD(+) + 4 H(+)(out). Functionally, NDH-1 shuttles electrons from NADH, via FMN and iron-sulfur (Fe-S) centers, to quinones in the respiratory chain. The immediate electron acceptor for the enzyme in this species is believed to be ubiquinone. Couples the redox reaction to proton translocation (for every two electrons transferred, four hydrogen ions are translocated across the cytoplasmic membrane), and thus conserves the redox energy in a proton gradient. This subunit may bind ubiquinone. This chain is NADH-quinone oxidoreductase subunit H, found in Neisseria meningitidis serogroup C (strain 053442).